A 473-amino-acid polypeptide reads, in one-letter code: Protein AUXIN RESPONSE 4 (473 aa).

Residues 1–10 (MAIITEEEED) show a composition bias toward acidic residues. Residues 1–38 (MAIITEEEEDPKTLNPPKNKPKDSDFTKSESTMKNPKP) are disordered. Positions 29-38 (SESTMKNPKP) are enriched in polar residues. The helical transmembrane segment at 44-64 (FPFWFYFTVVVSLATIIFISL) threads the bilayer. One can recognise an AB hydrolase-1 domain in the interval 119 to 283 (TVVIVHGLGL…DSSISPALPL (165 aa)).

As to expression, most abundant in root tissue, lesser amounts in rosette leaves, stems and flowers and very little in mature siliques.

Its subcellular location is the endoplasmic reticulum membrane. Required for the auxin influx facilitator AUX1 polar trafficking and its asymmetric localization within the plasma membrane. Not involved in the PIN proteins localization. In Arabidopsis thaliana (Mouse-ear cress), this protein is Protein AUXIN RESPONSE 4 (AXR4).